The primary structure comprises 315 residues: tRNA pseudouridine synthase B (315 aa).

The active-site Nucleophile is the D47.

This sequence belongs to the pseudouridine synthase TruB family. Type 1 subfamily.

The catalysed reaction is uridine(55) in tRNA = pseudouridine(55) in tRNA. Responsible for synthesis of pseudouridine from uracil-55 in the psi GC loop of transfer RNAs. The protein is tRNA pseudouridine synthase B of Shewanella pealeana (strain ATCC 700345 / ANG-SQ1).